The following is a 121-amino-acid chain: UPF0295 protein BH0952 (121 aa).

2 helical membrane passes run 12–32 (IRTFALSLVFLGILVMYIGIF) and 41–61 (VLAMILGFLCIIASTAVYFWI).

It belongs to the UPF0295 family.

Its subcellular location is the cell membrane. The polypeptide is UPF0295 protein BH0952 (Halalkalibacterium halodurans (strain ATCC BAA-125 / DSM 18197 / FERM 7344 / JCM 9153 / C-125) (Bacillus halodurans)).